The chain runs to 276 residues: 1-(5-phosphoribosyl)-5-[(5-phosphoribosylamino)methylideneamino] imidazole-4-carboxamide isomerase (276 aa).

Belongs to the HisA/HisF family.

It is found in the cytoplasm. The catalysed reaction is 1-(5-phospho-beta-D-ribosyl)-5-[(5-phospho-beta-D-ribosylamino)methylideneamino]imidazole-4-carboxamide = 5-[(5-phospho-1-deoxy-D-ribulos-1-ylimino)methylamino]-1-(5-phospho-beta-D-ribosyl)imidazole-4-carboxamide. It participates in amino-acid biosynthesis; L-histidine biosynthesis; L-histidine from 5-phospho-alpha-D-ribose 1-diphosphate: step 4/9. In Debaryomyces hansenii (strain ATCC 36239 / CBS 767 / BCRC 21394 / JCM 1990 / NBRC 0083 / IGC 2968) (Yeast), this protein is 1-(5-phosphoribosyl)-5-[(5-phosphoribosylamino)methylideneamino] imidazole-4-carboxamide isomerase (HIS6).